We begin with the raw amino-acid sequence, 117 residues long: MDMRVPAQLLGLLLLWFPGARCNIQMTQSPSAMSASVGDRVTITCRARQGISNYLAWFQQKPGKVPKHLIYAASSLQSGVPSRFSGSGSGTEFTLTISSLQPEDFATYYCLQHNSYP.

The first 22 residues, 1-22, serve as a signal peptide directing secretion; that stretch reads MDMRVPAQLLGLLLLWFPGARC. The framework-1 stretch occupies residues 23–45; that stretch reads NIQMTQSPSAMSASVGDRVTITC. In terms of domain architecture, Ig-like spans 23–117; the sequence is NIQMTQSPSA…YYCLQHNSYP (95 aa). Residues Cys-45 and Cys-110 are joined by a disulfide bond. The interval 46 to 56 is complementarity-determining-1; the sequence is RARQGISNYLA. The framework-2 stretch occupies residues 57–71; that stretch reads WFQQKPGKVPKHLIY. Residues 72–78 form a complementarity-determining-2 region; it reads AASSLQS. The segment at 79–110 is framework-3; that stretch reads GVPSRFSGSGSGTEFTLTISSLQPEDFATYYC. The tract at residues 111 to 117 is complementarity-determining-3; the sequence is LQHNSYP.

As to quaternary structure, immunoglobulins are composed of two identical heavy chains and two identical light chains; disulfide-linked.

The protein resides in the secreted. The protein localises to the cell membrane. Its function is as follows. V region of the variable domain of immunoglobulin light chains that participates in the antigen recognition. Immunoglobulins, also known as antibodies, are membrane-bound or secreted glycoproteins produced by B lymphocytes. In the recognition phase of humoral immunity, the membrane-bound immunoglobulins serve as receptors which, upon binding of a specific antigen, trigger the clonal expansion and differentiation of B lymphocytes into immunoglobulins-secreting plasma cells. Secreted immunoglobulins mediate the effector phase of humoral immunity, which results in the elimination of bound antigens. The antigen binding site is formed by the variable domain of one heavy chain, together with that of its associated light chain. Thus, each immunoglobulin has two antigen binding sites with remarkable affinity for a particular antigen. The variable domains are assembled by a process called V-(D)-J rearrangement and can then be subjected to somatic hypermutations which, after exposure to antigen and selection, allow affinity maturation for a particular antigen. This is Immunoglobulin kappa variable 1D-17 from Homo sapiens (Human).